Reading from the N-terminus, the 511-residue chain is MEEISPAVALTLGLANTMCDSGISSTFDISELENVTDAADMLCNQKRQRYSNGVVDCIMGSVSEEKTLSEVRSLSSDFSVTVQESEEDEPLVSDATIISEGLIVVDARSEISLPDTVETDNGRVLATAIILNETTIEQVPTAEVLIASLNHDVNMEVATSEVVIRLPEENPNVARGSRSVYELECIPLWGTISICGGRSEMEDAVRALPHFLKIPIKMLMGDHEGMSPSLPYLTSHFFGVYDGHGGAQVADYCHDRIHSALAEEIERIKEELCRRNTGEGRQVQWEKVFVDCYLKVDDEVKGKINRPVVGSSDRMVLEAVSPETVGSTAVVALVCSSHIIVSNCGDSRAVLLRGKDSMPLSVDHKPDREDEYARIEKAGGKVIQWQGARVSGVLAMSRSIGDQYLEPFVIPDPEVTFMPRAREDECLILASDGLWDVMSNQEACDFARRRILAWHKKNGALPLAERGVGEDQACQAAAEYLSKLAIQMGSKDNISIIVIDLKAQRKFKTRS.

Positions 1-19 (MEEISPAVALTLGLANTMC) are cleaved as a signal peptide. Residues 188–501 (LWGTISICGG…DNISIIVIDL (314 aa)) form the PPM-type phosphatase domain. Residues D242, G243, D432, and D492 each contribute to the Mn(2+) site.

It belongs to the PP2C family. Interacts with PYL13. The cofactor is Mg(2+). Mn(2+) serves as cofactor. Expressed in seeds.

It catalyses the reaction O-phospho-L-seryl-[protein] + H2O = L-seryl-[protein] + phosphate. It carries out the reaction O-phospho-L-threonyl-[protein] + H2O = L-threonyl-[protein] + phosphate. Its function is as follows. Key component and repressor of the abscisic acid (ABA) signaling pathway that regulates numerous ABA responses, such as stomatal closure, seed germination and inhibition of vegetative growth. The chain is Protein phosphatase 2C 7 (HAB2) from Arabidopsis thaliana (Mouse-ear cress).